A 554-amino-acid polypeptide reads, in one-letter code: Trichloroethene reductive dehalogenase (554 aa).

A signal peptide (tat-type signal) is located at residues 1–42 (MSEKYHSTVTRRDFMKRLGLAGAGAGALGAAVLAENNLPHEF). 2 consecutive 4Fe-4S ferredoxin-type domains span residues 425–457 (PTKPIDAGIREFCKTCGICAEHCPTQAISHEGP) and 471–500 (EGWHLDYHKCINCTICEAVCPFFTMSNNSW). [4Fe-4S] cluster is bound by residues Cys437, Cys440, Cys443, Cys447, Cys480, Cys483, Cys486, and Cys490.

This sequence belongs to the PceA family. The cofactor is [4Fe-4S] cluster. Corrinoid is required as a cofactor. In terms of processing, predicted to be exported by the Tat system. The position of the signal peptide cleavage has been experimentally proven.

It is found in the cell membrane. The enzyme catalyses trichloroethene + AH2 = (Z)-1,2-dichloroethene + chloride + A + H(+). It catalyses the reaction (Z)-1,2-dichloroethene + AH2 = chloroethene + chloride + A + H(+). The catalysed reaction is 1,1-dichloroethene + AH2 = chloroethene + chloride + A + H(+). With respect to regulation, loses 93% of its activity upon incubation with 1-iodopropane and titanium(III) citrate in the dark. Subsequent exposure to light restores 80% of the original activity. Completely inhibited by 2 mM sodium sulfite or sodium dithionite, and by 1 mM cuprous chloride. In terms of biological role, catalyzes the reductive dechlorination of trichloroethene (TCE) to cis-1,2-dichloroethene (DCE) and of cis-1,2-dichloroethene to chloroethene. The substrate specificity is broad, and the enzyme can dehalogenate various substrates, including 1,1-dichloroethene (1,1-DCE), 1,2-dichloroethane and 1,2-dibromoethane. A variety of other haloalkanes and haloalkenes containing three to five carbon atoms are dehalogenated at lower rates. Trans-1,2-dichloroethene (trans-DCE) and chloroethene are degraded at rates which are approximately 2 orders of magnitude lower. Titanium(III) citrate and methyl viologen can be used as reductants. This is Trichloroethene reductive dehalogenase from Dehalococcoides mccartyi (strain ATCC BAA-2266 / KCTC 15142 / 195) (Dehalococcoides ethenogenes (strain 195)).